The sequence spans 69 residues: Cytochrome b-c1 complex subunit 6 (69 aa).

Intrachain disulfides connect Cys-17-Cys-59 and Cys-31-Cys-45.

This sequence belongs to the UQCRH/QCR6 family. In terms of assembly, component of the ubiquinol-cytochrome c oxidoreductase (cytochrome b-c1 complex, complex III, CIII), a multisubunit enzyme composed of 3 respiratory subunits cytochrome b, cytochrome c1 and Rieske protein, 2 core protein subunits, and additional low-molecular weight protein subunits. The complex exists as an obligatory dimer and forms supercomplexes (SCs) in the inner mitochondrial membrane with cytochrome c oxidase (complex IV, CIV).

It localises to the mitochondrion inner membrane. Functionally, component of the ubiquinol-cytochrome c oxidoreductase, a multisubunit transmembrane complex that is part of the mitochondrial electron transport chain which drives oxidative phosphorylation. The respiratory chain contains 3 multisubunit complexes succinate dehydrogenase (complex II, CII), ubiquinol-cytochrome c oxidoreductase (cytochrome b-c1 complex, complex III, CIII) and cytochrome c oxidase (complex IV, CIV), that cooperate to transfer electrons derived from NADH and succinate to molecular oxygen, creating an electrochemical gradient over the inner membrane that drives transmembrane transport and the ATP synthase. The cytochrome b-c1 complex catalyzes electron transfer from ubiquinol to cytochrome c, linking this redox reaction to translocation of protons across the mitochondrial inner membrane, with protons being carried across the membrane as hydrogens on the quinol. In the process called Q cycle, 2 protons are consumed from the matrix, 4 protons are released into the intermembrane space and 2 electrons are passed to cytochrome c. This is Cytochrome b-c1 complex subunit 6 from Solanum tuberosum (Potato).